Reading from the N-terminus, the 408-residue chain is Tryptophan synthase beta chain (408 aa).

Position 103 is an N6-(pyridoxal phosphate)lysine (Lys103).

It belongs to the TrpB family. Tetramer of two alpha and two beta chains. Requires pyridoxal 5'-phosphate as cofactor.

It catalyses the reaction (1S,2R)-1-C-(indol-3-yl)glycerol 3-phosphate + L-serine = D-glyceraldehyde 3-phosphate + L-tryptophan + H2O. It functions in the pathway amino-acid biosynthesis; L-tryptophan biosynthesis; L-tryptophan from chorismate: step 5/5. In terms of biological role, the beta subunit is responsible for the synthesis of L-tryptophan from indole and L-serine. This chain is Tryptophan synthase beta chain, found in Koribacter versatilis (strain Ellin345).